The primary structure comprises 168 residues: Calcium-binding protein 2 (168 aa).

EF-hand domains lie at 13 to 48 (GMEK…AGKK), 48 to 83 (KNPE…MNDE), 88 to 123 (VLNW…QGAE), and 124 to 159 (DPEL…KKFS). Positions 26, 28, 30, 32, 37, 61, 63, 65, 67, 72, 101, 103, 105, 107, 112, 137, 139, 141, and 148 each coordinate Ca(2+).

Functionally, not known; probably binds four calcium ions. The chain is Calcium-binding protein 2 (cbp2) from Dictyostelium discoideum (Social amoeba).